A 302-amino-acid polypeptide reads, in one-letter code: Phosphoribosylaminoimidazole-succinocarboxamide synthase (302 aa).

The protein belongs to the SAICAR synthetase family.

It carries out the reaction 5-amino-1-(5-phospho-D-ribosyl)imidazole-4-carboxylate + L-aspartate + ATP = (2S)-2-[5-amino-1-(5-phospho-beta-D-ribosyl)imidazole-4-carboxamido]succinate + ADP + phosphate + 2 H(+). The protein operates within purine metabolism; IMP biosynthesis via de novo pathway; 5-amino-1-(5-phospho-D-ribosyl)imidazole-4-carboxamide from 5-amino-1-(5-phospho-D-ribosyl)imidazole-4-carboxylate: step 1/2. This Leptothrix cholodnii (strain ATCC 51168 / LMG 8142 / SP-6) (Leptothrix discophora (strain SP-6)) protein is Phosphoribosylaminoimidazole-succinocarboxamide synthase.